Consider the following 106-residue polypeptide: UPF0473 protein LSEI_0788 (106 aa).

This sequence belongs to the UPF0473 family.

The protein is UPF0473 protein LSEI_0788 of Lacticaseibacillus paracasei (strain ATCC 334 / BCRC 17002 / CCUG 31169 / CIP 107868 / KCTC 3260 / NRRL B-441) (Lactobacillus paracasei).